The following is a 593-amino-acid chain: Proline--tRNA ligase (593 aa).

This sequence belongs to the class-II aminoacyl-tRNA synthetase family. ProS type 1 subfamily. Homodimer.

Its subcellular location is the cytoplasm. The enzyme catalyses tRNA(Pro) + L-proline + ATP = L-prolyl-tRNA(Pro) + AMP + diphosphate. In terms of biological role, catalyzes the attachment of proline to tRNA(Pro) in a two-step reaction: proline is first activated by ATP to form Pro-AMP and then transferred to the acceptor end of tRNA(Pro). As ProRS can inadvertently accommodate and process non-cognate amino acids such as alanine and cysteine, to avoid such errors it has two additional distinct editing activities against alanine. One activity is designated as 'pretransfer' editing and involves the tRNA(Pro)-independent hydrolysis of activated Ala-AMP. The other activity is designated 'posttransfer' editing and involves deacylation of mischarged Ala-tRNA(Pro). The misacylated Cys-tRNA(Pro) is not edited by ProRS. The protein is Proline--tRNA ligase of Synechococcus sp. (strain CC9605).